Consider the following 997-residue polypeptide: Protein translocase subunit SecA (997 aa).

ATP-binding positions include Q102, 120-124 (GEGKT), and D521. Positions 893–997 (PADASPNGVV…KYKKCHGAEA (105 aa)) are disordered. The segment covering 938–953 (AIEREFEKKKQQELSH) has biased composition (basic and acidic residues). The Zn(2+) site is built by C981, C983, C992, and H993. Residues 987-997 (KKYKKCHGAEA) are compositionally biased toward basic residues.

It belongs to the SecA family. As to quaternary structure, monomer and homodimer. Part of the essential Sec protein translocation apparatus which comprises SecA, SecYEG and auxiliary proteins SecDF. Other proteins may also be involved. It depends on Zn(2+) as a cofactor.

Its subcellular location is the cell inner membrane. It localises to the cytoplasm. It catalyses the reaction ATP + H2O + cellular proteinSide 1 = ADP + phosphate + cellular proteinSide 2.. Part of the Sec protein translocase complex. Interacts with the SecYEG preprotein conducting channel. Has a central role in coupling the hydrolysis of ATP to the transfer of proteins into and across the cell membrane, serving as an ATP-driven molecular motor driving the stepwise translocation of polypeptide chains across the membrane. The chain is Protein translocase subunit SecA from Acidobacterium capsulatum (strain ATCC 51196 / DSM 11244 / BCRC 80197 / JCM 7670 / NBRC 15755 / NCIMB 13165 / 161).